Here is a 272-residue protein sequence, read N- to C-terminus: GPN-loop GTPase 3 (272 aa).

13–18 (GAGKST) contributes to the GTP binding site. The Gly-Pro-Asn (GPN)-loop; involved in dimer interface motif lies at 70–72 (GPN). 173–176 (SKLD) provides a ligand contact to GTP.

It belongs to the GPN-loop GTPase family. Heterodimers with NPA3/GPN1 or GPN2. Binds to RNA polymerase II (RNAPII).

Small GTPase required for proper nuclear localization of RNA polymerase II and III (RNAPII and RNAPIII). May act at an RNAP assembly step prior to nuclear import. Promotes sister chromatid separation during anaphase. This Saccharomyces cerevisiae (strain ATCC 204508 / S288c) (Baker's yeast) protein is GPN-loop GTPase 3.